Reading from the N-terminus, the 328-residue chain is Ferredoxin--NADP reductase 1 (328 aa).

Residues E37, K45, Y49, V89, and T310 each coordinate FAD.

Belongs to the ferredoxin--NADP reductase type 2 family. In terms of assembly, homodimer. The cofactor is FAD.

The catalysed reaction is 2 reduced [2Fe-2S]-[ferredoxin] + NADP(+) + H(+) = 2 oxidized [2Fe-2S]-[ferredoxin] + NADPH. This Latilactobacillus sakei subsp. sakei (strain 23K) (Lactobacillus sakei subsp. sakei) protein is Ferredoxin--NADP reductase 1.